Reading from the N-terminus, the 2273-residue chain is Retinal-specific phospholipid-transporting ATPase ABCA4 (2273 aa).

At 1 to 21 the chain is on the cytoplasmic side; it reads MGFVRQIQLLLWKNWTLRKRQ. Residues 22 to 42 traverse the membrane as a helical segment; it reads KIRFVVELVWPLSLFLVLIWL. The Extracellular segment spans residues 43–646; that stretch reads RNANPLYSHH…MPYPCFVDDS (604 aa). Cystine bridges form between Cys54–Cys81 and Cys75–Cys324. Asn98 carries N-linked (GlcNAc...) asparagine glycosylation. Ser336 and Asn338 together coordinate Mg(2+). Cysteines 370 and 519 form a disulfide. Residues Asn415, Asn444, and Asn504 are each glycosylated (N-linked (GlcNAc...) asparagine). An N-all-trans-retinylidenephosphatidylethanolamine-binding residues include Arg587 and Arg653. 3 disulfides stabilise this stretch: Cys641/Cys1490, Cys1444/Cys1455, and Cys1488/Cys1502. A helical transmembrane segment spans residues 647–667; that stretch reads FMIILNRCFPIFMVLAWIYSV. Topologically, residues 668 to 699 are cytoplasmic; sequence SMTVKSIVLEKELRLKETLKNQGVSNAVIWCT. A helical membrane pass occupies residues 700–720; sequence WFLDSFSIMSMSIFLLTIFIM. The Extracellular portion of the chain corresponds to 721 to 730; it reads HGRILHYSDP. The helical transmembrane segment at 731–751 threads the bilayer; that stretch reads FILFLFLLAFSTATIMLCFLL. The Cytoplasmic portion of the chain corresponds to 752–759; sequence STFFSKAS. Residues 760-780 form a helical membrane-spanning segment; sequence LAAACSGVIYFTLYLPHILCF. Topologically, residues 781–835 are extracellular; that stretch reads AWQDRMTAELKKAVSLLSPVAFGFGTEYLVRFEEQGLGLQWSNIGNSPTEGDEFS. Residues 836–856 form a helical membrane-spanning segment; that stretch reads FLLSMQMMLLDAAVYGLLAWY. Residues 857–1376 lie on the Cytoplasmic side of the membrane; it reads LDQVFPGDYG…IRSHKDFLAQ (520 aa). Residues 891–911 form a disordered region; it reads ERALEKTEPLTEETEDPEHPE. The residue at position 901 (Thr901) is a Phosphothreonine. One can recognise an ABC transporter 1 domain in the interval 929 to 1160; the sequence is VCVKNLVKIF…FGTGLYLTLV (232 aa). Residues Phe938, Gly966, and Lys969 each contribute to the ATP site. Residue Thr970 participates in Mg(2+) binding. 6 residues coordinate ATP: Thr971, Gln1010, Lys1054, Gly1064, Gly1065, and His1118. Phosphoserine is present on Ser1185. The segment at 1284-1345 is disordered; sequence PLFAGGAQQK…EPECPGPQLN (62 aa). Thr1313 is subject to Phosphothreonine. Ser1317 is subject to Phosphoserine. The span at 1331–1340 shows a compositional bias: pro residues; the sequence is GQPPPEPECP. Residues 1377–1397 form a helical membrane-spanning segment; that stretch reads IVLPATFVFLALMLSIVIPPF. At 1398–1727 the chain is on the extracellular side; the sequence is GEYPALTLHP…VSPTTYWVTN (330 aa). An N-linked (GlcNAc...) asparagine glycan is attached at Asn1469. 3 N-linked (GlcNAc...) asparagine glycosylation sites follow: Asn1529, Asn1588, and Asn1662. Residues 1728–1748 form a helical membrane-spanning segment; sequence FLWDIMNYSVSAGLVVGIFIG. At 1749–1759 the chain is on the cytoplasmic side; that stretch reads FQKKAYTSPEN. Residues 1760–1780 traverse the membrane as a helical segment; the sequence is LPALVALLLLYGWAVIPMMYP. Topologically, residues 1781-1792 are extracellular; it reads ASFLFDVPSTAY. Residues 1793-1813 traverse the membrane as a helical segment; the sequence is VALSCANLFIGINSSAITFIL. Topologically, residues 1814–1831 are cytoplasmic; the sequence is ELFENNRTLLRFNAVLRK. A helical membrane pass occupies residues 1832-1852; that stretch reads LLIVFPHFCLGRGLIDLALSQ. The Extracellular portion of the chain corresponds to 1853-1873; sequence AVTDVYARFGEEHSANPFHWD. The helical transmembrane segment at 1874–1894 threads the bilayer; the sequence is LIGKNLFAMVVEGVVYFLLTL. The Cytoplasmic segment spans residues 1895–2273; the sequence is LVQRHFFLSQ…AAGASRQAQD (379 aa). Positions 1938 to 2170 constitute an ABC transporter 2 domain; the sequence is LRLHELTKIY…FGDGYIVTMK (233 aa). Residues Asn1974, Gly1975, Lys1978, Thr1979, Thr1980, and Gly2073 each contribute to the ATP site. Thr1979 lines the Mg(2+) pocket. The segment at 2244–2249 is essential for ATP binding and ATPase activity; sequence VFVNFA.

The protein belongs to the ABC transporter superfamily. ABCA family. Post-translationally, proteolytic cleavage by trypsin leads to a 120-kDa N-terminal fragment and a 115-kDa C-terminal fragment that are linked through disulfide bonds. In terms of processing, N-glycosylated. Phosphorylation is independent of light exposure and modulates ATPase activity. In terms of tissue distribution, retinal-specific. Seems to be exclusively found in the rims of rod photoreceptor cells.

The protein localises to the membrane. It is found in the endoplasmic reticulum. Its subcellular location is the cytoplasmic vesicle. It localises to the cell projection. The protein resides in the cilium. The protein localises to the photoreceptor outer segment. The catalysed reaction is an N-all-trans-retinylidenephosphatidylethanolamine(out) + ATP + H2O = an N-all-trans-retinylidenephosphatidylethanolamine(in) + ADP + phosphate + H(+). The enzyme catalyses ATP + H2O + phospholipidSide 1 = ADP + phosphate + phospholipidSide 2.. It carries out the reaction a 1,2-diacyl-sn-glycero-3-phosphoethanolamine(out) + ATP + H2O = a 1,2-diacyl-sn-glycero-3-phosphoethanolamine(in) + ADP + phosphate + H(+). It catalyses the reaction N-11-cis-retinylidenephosphatidylethanolamine(out) + ATP + H2O = N-11-cis-retinylidenephosphatidylethanolamine(in) + ADP + phosphate + H(+). The catalysed reaction is ATP + H2O = ADP + phosphate + H(+). Its activity is regulated as follows. ATPase activity is decreased by cholesterol and ceramide. Phospholipids translocase activity is highly reduced by berylium fluoride and aluminum floride. N-ethylmaleimide inhibits phospholipid translocase activity. Flippase that catalyzes in an ATP-dependent manner the transport of retinal-phosphatidylethanolamine conjugates like 11-cis and all-trans isomers of N-retinylidene-phosphatidylethanolamine (N-Ret-PE) from the lumen to the cytoplasmic leaflet of photoreceptor outer segment disk membranes, where 11-cis-retinylidene-phosphatidylethanolamine is then isomerized to its all-trans isomer and reduced by RDH8 to produce all-trans-retinol. This transport activity ensures that all-trans-retinal generated from photoexcitation and 11-cis-retinal not needed for the regeneration of rhodopsin and cone opsins are effectively cleared from the photoreceptors, therefore preventing their accumulation and the formation of toxic bisretinoid. Displays ATPase activity in vitro in absence of retinal substrate. May display GTPase activity that is strongly influenced by the lipid environment and the presence of retinoid compounds. Binds the unprotonated form of N-retinylidene-phosphatidylethanolamine with high affinity in the absence of ATP, and ATP binding and hydrolysis induce a protein conformational change that causes N-retinylidene-phosphatidylethanolamine release. This Homo sapiens (Human) protein is Retinal-specific phospholipid-transporting ATPase ABCA4.